The primary structure comprises 230 residues: NAD(P)H-hydrate epimerase (230 aa).

Residues 11 to 218 (AIDVDQELFT…ALQRKYELNL (208 aa)) enclose the YjeF N-terminal domain. A (6S)-NADPHX-binding site is contributed by 61–65 (NNGGD). K(+) contacts are provided by asparagine 62 and aspartate 126. (6S)-NADPHX is bound by residues 130-136 (GFSFKPP) and aspartate 159. Serine 162 serves as a coordination point for K(+).

This sequence belongs to the NnrE/AIBP family. K(+) serves as cofactor.

It carries out the reaction (6R)-NADHX = (6S)-NADHX. The enzyme catalyses (6R)-NADPHX = (6S)-NADPHX. Catalyzes the epimerization of the S- and R-forms of NAD(P)HX, a damaged form of NAD(P)H that is a result of enzymatic or heat-dependent hydration. This is a prerequisite for the S-specific NAD(P)H-hydrate dehydratase to allow the repair of both epimers of NAD(P)HX. This Drosophila erecta (Fruit fly) protein is NAD(P)H-hydrate epimerase.